The primary structure comprises 773 residues: Phenylalanine--tRNA ligase beta subunit (773 aa).

The tRNA-binding domain maps to 39 to 150; the sequence is LKAPDKVVVG…GKLELGRPLN (112 aa). Residues 391–467 enclose the B5 domain; it reads KELPIIPISI…RIIGIDNIAS (77 aa). D445, D451, E454, and E455 together coordinate Mg(2+). One can recognise an FDX-ACB domain in the interval 682-773; sequence SKFPAITRDL…TLKNLGLDLR (92 aa).

Belongs to the phenylalanyl-tRNA synthetase beta subunit family. Type 1 subfamily. As to quaternary structure, tetramer of two alpha and two beta subunits. Requires Mg(2+) as cofactor.

Its subcellular location is the cytoplasm. The catalysed reaction is tRNA(Phe) + L-phenylalanine + ATP = L-phenylalanyl-tRNA(Phe) + AMP + diphosphate + H(+). This chain is Phenylalanine--tRNA ligase beta subunit, found in Campylobacter jejuni (strain RM1221).